The sequence spans 85 residues: Large ribosomal subunit protein bL27 (85 aa).

A disordered region spans residues 1 to 25 (MAHKKGVGSSRNGRDSNPKMLGVKR).

The protein belongs to the bacterial ribosomal protein bL27 family.

The sequence is that of Large ribosomal subunit protein bL27 from Roseiflexus castenholzii (strain DSM 13941 / HLO8).